The sequence spans 226 residues: Phosphoribosylformylglycinamidine synthase subunit PurQ (226 aa).

The Glutamine amidotransferase type-1 domain occupies 2–225 (RFGIVVFPGS…MHYLEGGKNN (224 aa)). The active-site Nucleophile is Cys86. Catalysis depends on residues His194 and Glu196.

As to quaternary structure, part of the FGAM synthase complex composed of 1 PurL, 1 PurQ and 2 PurS subunits.

It is found in the cytoplasm. The enzyme catalyses N(2)-formyl-N(1)-(5-phospho-beta-D-ribosyl)glycinamide + L-glutamine + ATP + H2O = 2-formamido-N(1)-(5-O-phospho-beta-D-ribosyl)acetamidine + L-glutamate + ADP + phosphate + H(+). The catalysed reaction is L-glutamine + H2O = L-glutamate + NH4(+). The protein operates within purine metabolism; IMP biosynthesis via de novo pathway; 5-amino-1-(5-phospho-D-ribosyl)imidazole from N(2)-formyl-N(1)-(5-phospho-D-ribosyl)glycinamide: step 1/2. Its function is as follows. Part of the phosphoribosylformylglycinamidine synthase complex involved in the purines biosynthetic pathway. Catalyzes the ATP-dependent conversion of formylglycinamide ribonucleotide (FGAR) and glutamine to yield formylglycinamidine ribonucleotide (FGAM) and glutamate. The FGAM synthase complex is composed of three subunits. PurQ produces an ammonia molecule by converting glutamine to glutamate. PurL transfers the ammonia molecule to FGAR to form FGAM in an ATP-dependent manner. PurS interacts with PurQ and PurL and is thought to assist in the transfer of the ammonia molecule from PurQ to PurL. In Alkaliphilus metalliredigens (strain QYMF), this protein is Phosphoribosylformylglycinamidine synthase subunit PurQ.